The primary structure comprises 342 residues: MSAPGGPLARLEARVTREWQRRGALAWALTPFACVFGLCAALRRTAYAQGWKQPVDVGVPVVVVGNVTVGGTGKTPTVIALVDALRAAGFTPGVVSRGYGANVKTPTAVTPASRASAAGDEPLLIARRTDAPVWVCPDRVAAAQALRAAHPDVDVIVSDDGLQHYRLARTVELVVFDHRLGGNGFLLPAGPLREPLSRHRDATLVNDPYSGALPPWPDTYALALTPGAAWHLDQPALRRPLSQFAHERVLAAAGIGAPERFFATLRAAGLAPATRALPDHYAFADNPFVDDAVDAILITEKDAVKLGASWRDARLWVVPVEAALDPRLIALVVEKLRGRSPA.

T68–T75 is an ATP binding site.

It belongs to the LpxK family.

It carries out the reaction a lipid A disaccharide + ATP = a lipid IVA + ADP + H(+). The protein operates within glycolipid biosynthesis; lipid IV(A) biosynthesis; lipid IV(A) from (3R)-3-hydroxytetradecanoyl-[acyl-carrier-protein] and UDP-N-acetyl-alpha-D-glucosamine: step 6/6. Functionally, transfers the gamma-phosphate of ATP to the 4'-position of a tetraacyldisaccharide 1-phosphate intermediate (termed DS-1-P) to form tetraacyldisaccharide 1,4'-bis-phosphate (lipid IVA). In Burkholderia ambifaria (strain MC40-6), this protein is Tetraacyldisaccharide 4'-kinase.